The sequence spans 613 residues: tRNA 5-methylaminomethyl-2-thiouridine biosynthesis bifunctional protein MnmC (613 aa).

Residues 1–225 (MKKAKLIFKD…KREMIKAYLE (225 aa)) form a tRNA (mnm(5)s(2)U34)-methyltransferase region. The interval 252–613 (IGAGISSAVL…FLIRKLKKGL (362 aa)) is FAD-dependent cmnm(5)s(2)U34 oxidoreductase.

It in the N-terminal section; belongs to the methyltransferase superfamily. tRNA (mnm(5)s(2)U34)-methyltransferase family. The protein in the C-terminal section; belongs to the DAO family. It depends on FAD as a cofactor.

The protein resides in the cytoplasm. The catalysed reaction is 5-aminomethyl-2-thiouridine(34) in tRNA + S-adenosyl-L-methionine = 5-methylaminomethyl-2-thiouridine(34) in tRNA + S-adenosyl-L-homocysteine + H(+). Functionally, catalyzes the last two steps in the biosynthesis of 5-methylaminomethyl-2-thiouridine (mnm(5)s(2)U) at the wobble position (U34) in tRNA. Catalyzes the FAD-dependent demodification of cmnm(5)s(2)U34 to nm(5)s(2)U34, followed by the transfer of a methyl group from S-adenosyl-L-methionine to nm(5)s(2)U34, to form mnm(5)s(2)U34. This is tRNA 5-methylaminomethyl-2-thiouridine biosynthesis bifunctional protein MnmC from Campylobacter jejuni subsp. jejuni serotype O:6 (strain 81116 / NCTC 11828).